The sequence spans 192 residues: Phosphoheptose isomerase (192 aa).

In terms of domain architecture, SIS spans 34–192; that stretch reads VVDAYKAGNK…VERELFVKGK (159 aa). 49–51 lines the substrate pocket; that stretch reads NGG. Zn(2+)-binding residues include histidine 58 and glutamate 62. Substrate contacts are provided by residues glutamate 62, 91–92, 117–119, serine 122, and glutamine 169; these read ND and STS. Glutamine 169 and histidine 177 together coordinate Zn(2+).

This sequence belongs to the SIS family. GmhA subfamily. In terms of assembly, homotetramer. Zn(2+) serves as cofactor.

The protein localises to the cytoplasm. The enzyme catalyses 2 D-sedoheptulose 7-phosphate = D-glycero-alpha-D-manno-heptose 7-phosphate + D-glycero-beta-D-manno-heptose 7-phosphate. The protein operates within carbohydrate biosynthesis; D-glycero-D-manno-heptose 7-phosphate biosynthesis; D-glycero-alpha-D-manno-heptose 7-phosphate and D-glycero-beta-D-manno-heptose 7-phosphate from sedoheptulose 7-phosphate: step 1/1. Its function is as follows. Catalyzes the isomerization of sedoheptulose 7-phosphate in D-glycero-D-manno-heptose 7-phosphate. The sequence is that of Phosphoheptose isomerase from Citrifermentans bemidjiense (strain ATCC BAA-1014 / DSM 16622 / JCM 12645 / Bem) (Geobacter bemidjiensis).